Consider the following 380-residue polypeptide: 3-isopropylmalate dehydratase large subunit 2 (380 aa).

[4Fe-4S] cluster contacts are provided by Cys262, Cys320, and Cys323.

The protein belongs to the aconitase/IPM isomerase family. LeuC type 2 subfamily. Heterodimer of LeuC and LeuD. The cofactor is [4Fe-4S] cluster.

The catalysed reaction is (2R,3S)-3-isopropylmalate = (2S)-2-isopropylmalate. It participates in amino-acid biosynthesis; L-leucine biosynthesis; L-leucine from 3-methyl-2-oxobutanoate: step 2/4. Its function is as follows. Catalyzes the isomerization between 2-isopropylmalate and 3-isopropylmalate, via the formation of 2-isopropylmaleate. The protein is 3-isopropylmalate dehydratase large subunit 2 of Pyrococcus furiosus (strain ATCC 43587 / DSM 3638 / JCM 8422 / Vc1).